The sequence spans 384 residues: Gastrin-releasing peptide receptor (384 aa).

Over 1 to 39 the chain is Extracellular; that stretch reads MDPNNCSHLNLEVDPFLSCNNTFNQTLNPPKMDNWFHPG. Residues Asn5, Asn20, and Asn24 are each glycosylated (N-linked (GlcNAc...) asparagine). A helical transmembrane segment spans residues 40–63; the sequence is IIYVIPAVYGLIIVIGLIGNITLI. The Cytoplasmic portion of the chain corresponds to 64 to 77; that stretch reads KIFCTVKSMRNVPN. A helical membrane pass occupies residues 78–97; the sequence is LFISSLALGDLLLLVTCAPV. Over 98–115 the chain is Extracellular; that stretch reads DASKYLADRWLFGRIGCK. Cys114 and Cys197 form a disulfide bridge. A helical transmembrane segment spans residues 116 to 137; it reads LIPFIQLTSVGVSVFTLTALSA. Over 138 to 153 the chain is Cytoplasmic; it reads DRYKAIVRPMDIQASH. Residues 154–175 form a helical membrane-spanning segment; that stretch reads ALMKICLKAALIWIVSMLLAIP. At 176-209 the chain is on the extracellular side; the sequence is EAVFSDLHPFHVKDTNQTFISCAPYPHSNELHPK. The chain crosses the membrane as a helical span at residues 210 to 235; that stretch reads IHSMASFLVFYIIPLSIISVYYYFIA. At 236-265 the chain is on the cytoplasmic side; the sequence is RNLIQSAYNLPVEGNIHVKKQIESRKRLAK. Residues 266–286 traverse the membrane as a helical segment; that stretch reads TVLVFVGLFAFCWLPNHVIYL. Topologically, residues 287–299 are extracellular; sequence YRSYHYSEVDTSM. A helical membrane pass occupies residues 300–326; the sequence is LHFITSICARLLAFTNSCVNPFALYLL. The Cytoplasmic segment spans residues 327-384; sequence SKSFRKQFNTQLLCCQPSLLNRSHSTGRSTTCMTSFKSTNPSATFSLINGNICHEGYV. The S-palmitoyl cysteine moiety is linked to residue Cys340. A Phosphoserine modification is found at Ser351.

Belongs to the G-protein coupled receptor 1 family. In terms of tissue distribution, expressed in the hippocampal CA1 region (at protein level).

Its subcellular location is the cell membrane. Receptor for gastrin-releasing peptide (GRP). Signals via association with G proteins that activate a phosphatidylinositol-calcium second messenger system, resulting in Akt phosphorylation. Contributes to the regulation of food intake. Contributes to the perception of prurient stimuli and transmission of itch signals in the spinal cord that promote scratching behavior, but does not play a role in the perception of pain. Contributes primarily to nonhistaminergic itch sensation. In one study, shown to act in the amygdala as part of an inhibitory network which inhibits memory specifically related to learned fear. In another study, shown to contribute to disinhibition of glutamatergic cells in the auditory cortex via signaling on vasoactive intestinal peptide-expressing cells which leads to enhanced auditory fear memories. Contributes to the induction of sighing through signaling in the pre-Botzinger complex, a cluster of several thousand neurons in the ventrolateral medulla responsible for inspiration during respiratory activity. This is Gastrin-releasing peptide receptor (Grpr) from Rattus norvegicus (Rat).